The primary structure comprises 142 residues: Large ribosomal subunit protein uL13 (142 aa).

This sequence belongs to the universal ribosomal protein uL13 family. As to quaternary structure, part of the 50S ribosomal subunit.

Functionally, this protein is one of the early assembly proteins of the 50S ribosomal subunit, although it is not seen to bind rRNA by itself. It is important during the early stages of 50S assembly. The protein is Large ribosomal subunit protein uL13 of Photorhabdus laumondii subsp. laumondii (strain DSM 15139 / CIP 105565 / TT01) (Photorhabdus luminescens subsp. laumondii).